The primary structure comprises 276 residues: Secreted RxLR effector protein 85 (276 aa).

Positions 1–27 (MRYCAFRLGLFFIGYSCCVLLSTPTLA) are cleaved as a signal peptide. The short motif at 110-113 (RQLR) is the RxLR element.

This sequence belongs to the RxLR effector family.

It localises to the secreted. The protein localises to the host cell membrane. Secreted effector that partially suppresses the host cell death induced by cell death-inducing proteins. The polypeptide is Secreted RxLR effector protein 85 (Plasmopara viticola (Downy mildew of grapevine)).